The chain runs to 299 residues: ATP phosphoribosyltransferase (299 aa).

The protein belongs to the ATP phosphoribosyltransferase family. Long subfamily. Mg(2+) is required as a cofactor.

It localises to the cytoplasm. It carries out the reaction 1-(5-phospho-beta-D-ribosyl)-ATP + diphosphate = 5-phospho-alpha-D-ribose 1-diphosphate + ATP. Its pathway is amino-acid biosynthesis; L-histidine biosynthesis; L-histidine from 5-phospho-alpha-D-ribose 1-diphosphate: step 1/9. With respect to regulation, feedback inhibited by histidine. Catalyzes the condensation of ATP and 5-phosphoribose 1-diphosphate to form N'-(5'-phosphoribosyl)-ATP (PR-ATP). Has a crucial role in the pathway because the rate of histidine biosynthesis seems to be controlled primarily by regulation of HisG enzymatic activity. The polypeptide is ATP phosphoribosyltransferase (Shewanella loihica (strain ATCC BAA-1088 / PV-4)).